A 417-amino-acid polypeptide reads, in one-letter code: BSD domain-containing protein 1-B (417 aa).

Positions 153 to 205 (WLAYWDPEQRKAEISEPLVTSPSIRALFTKMVPAAVSHSEFWQRYFYKVHQLE) constitute a BSD domain. Disordered regions lie at residues 215 to 234 (KQRANQSVHSEEPKWEEEEE), 262 to 292 (HVEDKSEKTAELNRDHTSVTSPSESSESISP), and 323 to 390 (AAET…DFDM). Residues 262–278 (HVEDKSEKTAELNRDHT) are compositionally biased toward basic and acidic residues. Residues 281–292 (TSPSESSESISP) are compositionally biased toward low complexity. Residues 332–343 (PVEQTGKSNAQM) are compositionally biased toward polar residues. The segment covering 345–356 (THREDPPSDLRV) has biased composition (basic and acidic residues). Polar residues predominate over residues 360-379 (NSDSGKSTPSNNGQKGSSTD). The span at 380–390 (VSEDWEKDFDM) shows a compositional bias: acidic residues.

The chain is BSD domain-containing protein 1-B (bsdc1-b) from Xenopus laevis (African clawed frog).